Consider the following 322-residue polypeptide: Phosphatidylserine decarboxylase proenzyme (322 aa).

Residues D90, H147, and S254 each act as charge relay system; for autoendoproteolytic cleavage activity in the active site. The active-site Schiff-base intermediate with substrate; via pyruvic acid; for decarboxylase activity is S254. S254 bears the Pyruvic acid (Ser); by autocatalysis mark. Positions 293 to 322 are disordered; the sequence is PDAEPAPLPAEEIEAEHDASPLIDDKKDQV. The span at 308-322 shows a compositional bias: basic and acidic residues; that stretch reads EHDASPLIDDKKDQV.

Belongs to the phosphatidylserine decarboxylase family. PSD-B subfamily. Prokaryotic type I sub-subfamily. As to quaternary structure, heterodimer of a large membrane-associated beta subunit and a small pyruvoyl-containing alpha subunit. It depends on pyruvate as a cofactor. In terms of processing, is synthesized initially as an inactive proenzyme. Formation of the active enzyme involves a self-maturation process in which the active site pyruvoyl group is generated from an internal serine residue via an autocatalytic post-translational modification. Two non-identical subunits are generated from the proenzyme in this reaction, and the pyruvate is formed at the N-terminus of the alpha chain, which is derived from the carboxyl end of the proenzyme. The autoendoproteolytic cleavage occurs by a canonical serine protease mechanism, in which the side chain hydroxyl group of the serine supplies its oxygen atom to form the C-terminus of the beta chain, while the remainder of the serine residue undergoes an oxidative deamination to produce ammonia and the pyruvoyl prosthetic group on the alpha chain. During this reaction, the Ser that is part of the protease active site of the proenzyme becomes the pyruvoyl prosthetic group, which constitutes an essential element of the active site of the mature decarboxylase.

The protein resides in the cell membrane. It catalyses the reaction a 1,2-diacyl-sn-glycero-3-phospho-L-serine + H(+) = a 1,2-diacyl-sn-glycero-3-phosphoethanolamine + CO2. The protein operates within phospholipid metabolism; phosphatidylethanolamine biosynthesis; phosphatidylethanolamine from CDP-diacylglycerol: step 2/2. Functionally, catalyzes the formation of phosphatidylethanolamine (PtdEtn) from phosphatidylserine (PtdSer). This Escherichia coli O127:H6 (strain E2348/69 / EPEC) protein is Phosphatidylserine decarboxylase proenzyme.